Consider the following 415-residue polypeptide: uncharacterized protein (415 aa).

Disordered stretches follow at residues Lys-329–Ser-351 and Lys-388–Leu-415. Positions Leu-338–Thr-348 are enriched in acidic residues. Over residues Lys-399–Asn-409 the composition is skewed to basic residues.

This is an uncharacterized protein from Acanthamoeba polyphaga mimivirus (APMV).